Here is a 69-residue protein sequence, read N- to C-terminus: Small, acid-soluble spore protein C1 (69 aa).

This sequence belongs to the alpha/beta-type SASP family.

SASP are bound to spore DNA. They are double-stranded DNA-binding proteins that cause DNA to change to an a-like conformation. They protect the DNA backbone from chemical and enzymatic cleavage and are thus involved in dormant spore's high resistance to UV light. The protein is Small, acid-soluble spore protein C1 (SASP-C1) of Priestia megaterium (Bacillus megaterium).